A 200-amino-acid polypeptide reads, in one-letter code: Recoverin (200 aa).

Glycine 2 carries the N-myristoyl glycine lipid modification. EF-hand domains are found at residues glutamate 25 to threonine 60, aspartate 61 to glycine 96, lysine 97 to methionine 132, and threonine 147 to isoleucine 182. Cysteine 39 carries the cysteine sulfenic acid (-SOH) modification. Ca(2+) is bound by residues aspartate 74, asparagine 76, aspartate 78, threonine 80, glutamate 85, aspartate 110, aspartate 112, asparagine 114, threonine 116, and glutamate 121. Residues glutamate 189–lysine 192 form an interaction with GRK1 region.

It belongs to the recoverin family. In terms of assembly, homodimer; disulfide-linked. Homodimerization is caused by prolonged intense illumination. May form a complex composed of RHO, GRK1 and RCVRN in a Ca(2+)-dependent manner; RCVRN prevents the interaction between GRK1 and RHO. Interacts (via C-terminus) with GRK1 (via N-terminus); the interaction is Ca(2+)-dependent. The N-terminal glycine is linked to one of four different types of acyl groups. The most abundant is myristoleate (14:1), but 14:0, 14:2, and 12:0 acyl residues are also present. The Ca(2+) induced exposure of the myristoyl group, known as the calcium-myristoyl switch, promotes RCVRN binding to the photoreceptor cell membranes only when intracellular Ca(2+) concentration is high. In terms of processing, oxidation on Cys-39 occurs in response to prolonged intense illumination and results in the formation of disulfide homodimers, and to a lesser extent disulfide-linked heterodimers. As to expression, retina and pineal gland.

The protein resides in the photoreceptor inner segment. It localises to the cell projection. It is found in the cilium. The protein localises to the photoreceptor outer segment. Its subcellular location is the photoreceptor outer segment membrane. The protein resides in the perikaryon. Functionally, acts as a calcium sensor and regulates phototransduction of cone and rod photoreceptor cells. Modulates light sensitivity of cone photoreceptor in dark and dim conditions. In response to high Ca(2+) levels induced by low light levels, prolongs RHO/rhodopsin activation in rod photoreceptor cells by binding to and inhibiting GRK1-mediated phosphorylation of RHO/rhodopsin. Plays a role in scotopic vision/enhances vision in dim light by enhancing signal transfer between rod photoreceptors and rod bipolar cells. Improves rod photoreceptor sensitivity in dim light and mediates response of rod photoreceptors to facilitate detection of change and motion in bright light. This is Recoverin (RCVRN) from Homo sapiens (Human).